Reading from the N-terminus, the 315-residue chain is Indoleacetate decarboxylase activating enzyme (315 aa).

Positions 21 to 311 constitute a Radical SAM core domain; it reads HDGPGIRTNV…ADIIEAHGVK (291 aa). Cys35, Cys39, Cys42, Cys61, Cys64, Cys67, Cys71, Cys98, Cys101, Cys106, and Cys110 together coordinate [4Fe-4S] cluster. 2 consecutive 4Fe-4S ferredoxin-type domains span residues 52 to 81 and 89 to 120; these read PQLLYTKMKCIGCMCCARACPYGAVSAITD and GYVHHDRSKCDKCTTHECLSACFQEALSIAGE. Residues Gly149, 198–200, and His271 each bind S-adenosyl-L-methionine; that span reads DCK.

It belongs to the organic radical-activating enzymes family. The cofactor is [4Fe-4S] cluster.

The enzyme catalyses glycyl-[protein] + reduced [flavodoxin] + S-adenosyl-L-methionine = glycin-2-yl radical-[protein] + semiquinone [flavodoxin] + 5'-deoxyadenosine + L-methionine + H(+). Functionally, catalyzes activation of the indoleacetate decarboxylase OsIAD under anaerobic conditions by generation of an organic free radical on a glycine residue, via a homolytic cleavage of S-adenosyl-L-methionine (SAM). In Tractidigestivibacter scatoligenes (Olsenella scatoligenes), this protein is Indoleacetate decarboxylase activating enzyme.